The following is a 1039-amino-acid chain: Translation initiation factor IF-2 (1039 aa).

2 disordered regions span residues 39–347 (TISE…KWQE) and 400–452 (ARPP…PEKV). Residues 103-125 (RNTTSNAPEASVANNQIASSEAN) show a composition bias toward polar residues. Low complexity predominate over residues 157-176 (PQKPAAPEAEPEAQSQAPAK). Basic and acidic residues-rich tracts occupy residues 178–197 (AVEKPEKSAQPRPGKPERQP) and 226–243 (PILKRDRPRREDERDQAK). Low complexity predominate over residues 408-423 (ARSASAATAAPISSPT). Residues 432–451 (NNRDQNRRQETEVKRERPEK) are compositionally biased toward basic and acidic residues. The 174-residue stretch at 533–706 (RRPPVVTIMG…LLVAEVGELS (174 aa)) folds into the tr-type G domain. Residues 542–549 (GHVDHGKT) form a G1 region. 542–549 (GHVDHGKT) lines the GTP pocket. The tract at residues 567 to 571 (GITQH) is G2. The tract at residues 592 to 595 (DTPG) is G3. GTP contacts are provided by residues 592 to 596 (DTPGH) and 646 to 649 (NKID). The interval 646-649 (NKID) is G4. Residues 682–684 (SAI) are G5.

Belongs to the TRAFAC class translation factor GTPase superfamily. Classic translation factor GTPase family. IF-2 subfamily.

It localises to the cytoplasm. One of the essential components for the initiation of protein synthesis. Protects formylmethionyl-tRNA from spontaneous hydrolysis and promotes its binding to the 30S ribosomal subunits. Also involved in the hydrolysis of GTP during the formation of the 70S ribosomal complex. The chain is Translation initiation factor IF-2 from Nostoc sp. (strain PCC 7120 / SAG 25.82 / UTEX 2576).